The sequence spans 890 residues: Bacteriocin BCN5 (890 aa).

SH3b domains are found at residues 22-84 (PPNA…TNAT) and 179-241 (ENNA…TNAT). In terms of domain architecture, Peptidase M14 spans 303-549 (GYVKYEGAAA…RYLQKIINAV (247 aa)). Positions 358, 361, and 475 each coordinate Zn(2+). Glu-525 acts as the Proton donor/acceptor in catalysis. One can recognise an SH3b 3 domain in the interval 572 to 636 (EATGEVINVQ…VNSGYIIILK (65 aa)). The interval 815–869 (KALAAAVIVNGVETMFCAFLGGFIAQCIAPEFPIVAAVAGAIVSAIAAFAIGYFV) is hydrophobic.

It depends on Zn(2+) as a cofactor.

In terms of biological role, may function as an ionophore. The sequence is that of Bacteriocin BCN5 (bcn) from Clostridium perfringens.